A 1085-amino-acid chain; its full sequence is Error-prone DNA polymerase (1085 aa).

The protein belongs to the DNA polymerase type-C family. DnaE2 subfamily.

The protein resides in the cytoplasm. It catalyses the reaction DNA(n) + a 2'-deoxyribonucleoside 5'-triphosphate = DNA(n+1) + diphosphate. Its function is as follows. DNA polymerase involved in damage-induced mutagenesis and translesion synthesis (TLS). It is not the major replicative DNA polymerase. This Symbiobacterium thermophilum (strain DSM 24528 / JCM 14929 / IAM 14863 / T) protein is Error-prone DNA polymerase.